Consider the following 147-residue polypeptide: MERTFVYLKPNAVRRGLVGEIIKRFEQRGIKIVALKLFWMTREQAERLYEMHKGKNFYNELIEFVTGGPVVAMVVEAPRVIEMVRHIIGNTDPLKAGTGTIRGEFALTVTKNLIHASDSKENFEREYKIFFSENEIVDYYLDVQDDI.

ATP contacts are provided by K9, F57, R85, T91, R102, and N112. H115 (pros-phosphohistidine intermediate) is an active-site residue.

This sequence belongs to the NDK family. In terms of assembly, homotetramer. It depends on Mg(2+) as a cofactor.

The protein localises to the cytoplasm. The enzyme catalyses a 2'-deoxyribonucleoside 5'-diphosphate + ATP = a 2'-deoxyribonucleoside 5'-triphosphate + ADP. It carries out the reaction a ribonucleoside 5'-diphosphate + ATP = a ribonucleoside 5'-triphosphate + ADP. Functionally, major role in the synthesis of nucleoside triphosphates other than ATP. The ATP gamma phosphate is transferred to the NDP beta phosphate via a ping-pong mechanism, using a phosphorylated active-site intermediate. The sequence is that of Nucleoside diphosphate kinase from Thermosipho melanesiensis (strain DSM 12029 / CIP 104789 / BI429).